The following is an 80-amino-acid chain: Protein FAM229B (80 aa).

Residues 1-44 (MPFRFGTQPRRFPVEGGDSSIGLEPGLSSSAACNGKEMSPTRQL) are disordered.

Belongs to the FAM229 family.

In Macaca fascicularis (Crab-eating macaque), this protein is Protein FAM229B (FAM229B).